The primary structure comprises 1021 residues: Translation initiation factor IF-2 (1021 aa).

The segment at 50-422 is disordered; that stretch reads AFPAEGGSAS…RMGAMVPRGN (373 aa). Over residues 57–71 the composition is skewed to gly residues; it reads SASGGRPGGRPGPGN. Residues 75–95 are compositionally biased toward pro residues; sequence PAPPRPGLAPRPGPRPVPGRP. The segment covering 96–112 has biased composition (low complexity); it reads GPAARPGGPAAPSAPAA. Residues 113 to 129 show a composition bias toward pro residues; the sequence is PSAPAPGAPAASPPASQ. Low complexity-rich tracts occupy residues 130–159, 167–178, and 187–196; these read PRPI…ASGP, GGPAAPGRARPG, and SAPSAPSAGG. Positions 198 to 208 are enriched in pro residues; that stretch reads RPGPRPGPRPS. Low complexity predominate over residues 219 to 233; sequence SAGPRQSAGQSGSGP. Composition is skewed to pro residues over residues 234–254 and 262–273; these read ASPP…PRPG and RPSPGSMPPRPG. 2 stretches are compositionally biased toward gly residues: residues 275–291 and 306–389; these read RPGG…GSGG and GAPG…GGRG. Over residues 390–401 the composition is skewed to basic residues; that stretch reads RPGRQRKSKRAK. A tr-type G domain is found at 514–686; the sequence is IRPPVVTVMG…IILTADASLD (173 aa). Residues 523-530 form a G1 region; it reads GHVDHGKT. Position 523-530 (523-530) interacts with GTP; it reads GHVDHGKT. The interval 548–552 is G2; that stretch reads GITQH. Residues 573–576 form a G3 region; it reads DTPG. Residues 573–577 and 627–630 contribute to the GTP site; these read DTPGH and NKVD. The interval 627–630 is G4; sequence NKVD. Positions 663–665 are G5; sequence SAR.

It belongs to the TRAFAC class translation factor GTPase superfamily. Classic translation factor GTPase family. IF-2 subfamily.

The protein resides in the cytoplasm. In terms of biological role, one of the essential components for the initiation of protein synthesis. Protects formylmethionyl-tRNA from spontaneous hydrolysis and promotes its binding to the 30S ribosomal subunits. Also involved in the hydrolysis of GTP during the formation of the 70S ribosomal complex. This Frankia alni (strain DSM 45986 / CECT 9034 / ACN14a) protein is Translation initiation factor IF-2.